A 115-amino-acid polypeptide reads, in one-letter code: DNA repair protein homolog YozK (115 aa).

Residues 12–115 (ILCVDMKSFY…EKCVHTYSID (104 aa)) form the UmuC domain. Mg(2+)-binding residues include Asp-16 and Asp-115.

This sequence belongs to the DNA polymerase type-Y family. Mg(2+) serves as cofactor.

The chain is DNA repair protein homolog YozK (yozK) from Bacillus subtilis (strain 168).